The primary structure comprises 374 residues: Putative cullin-like protein 2 (374 aa).

This sequence belongs to the cullin family.

The sequence is that of Putative cullin-like protein 2 from Arabidopsis thaliana (Mouse-ear cress).